Consider the following 213-residue polypeptide: Superoxide dismutase [Mn] (213 aa).

4 residues coordinate Mn(2+): His-27, His-82, Asp-168, and His-172.

The protein belongs to the iron/manganese superoxide dismutase family. Homodimer.

The enzyme catalyses 2 superoxide + 2 H(+) = H2O2 + O2. Its activity is regulated as follows. Inhibited by hydrogen peroxide. Destroys superoxide anion radicals which are normally produced within the cells and which are toxic to biological systems. This is Superoxide dismutase [Mn] (sodA) from Haemophilus ducreyi (strain 35000HP / ATCC 700724).